The following is a 365-amino-acid chain: MEVCLPNGHQVVDLINNAFEGRVSIYSAQEGWDKTISAQPDMMVCGGAVVCMHCLGVVGSLQRKLKHLPHHRCNQQIRHQDYVDVQFADRVTAHWKRGMLSFVAQMHEMMNDVSPDDLDRVRTEGGSLVELNWLQVDPNSMFRSIHSSWTDPLQVVDDLDTKLDQYWTALNLMIDSSDLIPNFMMRDPSHAFNGVKLGGDARQTQFSRTFDSRSSLEWGVMVYDYSELEHDPSKGRAYRKELVTPARDFGHFGLSHYSRATTPILGKMPAVFSGMLTGNCKMYPFIKGTAKLKTVRKLVEAVNHAWGVEKIRYALGPGGMTGWYNRTMQQAPIVLTPAALTMFPDTIKFGDLNYPVMIGDPMILG.

A CCHC-type zinc finger spans residues 51 to 73; the sequence is CMHCLGVVGSLQRKLKHLPHHRC.

Belongs to the orthoreovirus sigma-3 protein family. In terms of assembly, heterohexamer of three sigma-3 and three Mu-1 proteins. The RNA-binding form is probably a homodimer. Post-translationally, cleaved during virus the endosomal proteolytic disassembly of the outer capsid.

Its subcellular location is the virion. The protein resides in the host cytoplasm. It localises to the host nucleus. Stimulates translation by blocking the activation of the dsRNA-dependent protein kinase EIF2AK2/PKR, thereby inhibiting the host interferon response. Sigma3 prevents the activation of EIF2AK2 by competing with the kinase for dsRNA-binding. In terms of biological role, the viral outer shell polypeptides, of which sigma-3 is one, impose structural constraints that prevent elongation of nascent transcripts by the RNA-dependent RNA polymerase lambda-3. In Reovirus type 3 (strain Dearing) (T3D), this protein is Outer capsid protein sigma-3 (S4).